We begin with the raw amino-acid sequence, 199 residues long: GTP cyclohydrolase-2 (199 aa).

49–53 (RVHSE) provides a ligand contact to GTP. Positions 54, 65, and 67 each coordinate Zn(2+). Residues Gln70, 92-94 (EGR), and Thr114 contribute to the GTP site. Asp126 serves as the catalytic Proton acceptor. Arg128 (nucleophile) is an active-site residue. 2 residues coordinate GTP: Thr149 and Lys154.

It belongs to the GTP cyclohydrolase II family. It depends on Zn(2+) as a cofactor.

It carries out the reaction GTP + 4 H2O = 2,5-diamino-6-hydroxy-4-(5-phosphoribosylamino)-pyrimidine + formate + 2 phosphate + 3 H(+). The protein operates within cofactor biosynthesis; riboflavin biosynthesis; 5-amino-6-(D-ribitylamino)uracil from GTP: step 1/4. Its function is as follows. Catalyzes the conversion of GTP to 2,5-diamino-6-ribosylamino-4(3H)-pyrimidinone 5'-phosphate (DARP), formate and pyrophosphate. The protein is GTP cyclohydrolase-2 of Baumannia cicadellinicola subsp. Homalodisca coagulata.